Here is a 610-residue protein sequence, read N- to C-terminus: UvrABC system protein C (610 aa).

The GIY-YIG domain maps to 16 to 94 (SQPGVYRMYD…IKLYQPRYNV (79 aa)). Positions 204 to 239 (QQVLTQLISRMEEASRLLHFEDAARIRDQIQAVRRV) constitute a UVR domain.

It belongs to the UvrC family. Interacts with UvrB in an incision complex.

The protein resides in the cytoplasm. In terms of biological role, the UvrABC repair system catalyzes the recognition and processing of DNA lesions. UvrC both incises the 5' and 3' sides of the lesion. The N-terminal half is responsible for the 3' incision and the C-terminal half is responsible for the 5' incision. This chain is UvrABC system protein C, found in Yersinia enterocolitica serotype O:8 / biotype 1B (strain NCTC 13174 / 8081).